A 172-amino-acid polypeptide reads, in one-letter code: Cytidylate kinase (172 aa).

Position 7-15 (7-15 (GPPGSGTST)) interacts with ATP.

This sequence belongs to the cytidylate kinase family. Type 2 subfamily.

The protein localises to the cytoplasm. The enzyme catalyses CMP + ATP = CDP + ADP. The catalysed reaction is dCMP + ATP = dCDP + ADP. This chain is Cytidylate kinase, found in Methanothrix thermoacetophila (strain DSM 6194 / JCM 14653 / NBRC 101360 / PT) (Methanosaeta thermophila).